The sequence spans 150 residues: FAD synthase (150 aa).

ATP is bound by residues 16-17, 21-24, and aspartate 102; these read VF and HVGH.

The protein belongs to the archaeal FAD synthase family. In terms of assembly, homodimer. It depends on a divalent metal cation as a cofactor.

The enzyme catalyses FMN + ATP + H(+) = FAD + diphosphate. It functions in the pathway cofactor biosynthesis; FAD biosynthesis; FAD from FMN: step 1/1. In terms of biological role, catalyzes the transfer of the AMP portion of ATP to flavin mononucleotide (FMN) to produce flavin adenine dinucleotide (FAD) coenzyme. This Thermococcus onnurineus (strain NA1) protein is FAD synthase.